We begin with the raw amino-acid sequence, 260 residues long: (R)-2-hydroxyglutaryl-CoA dehydratase activating ATPase (260 aa).

12 to 16 (STASK) provides a ligand contact to ATP. Positions 127 and 166 each coordinate [4Fe-4S] cluster. Q220 and Q243 together coordinate ATP.

Belongs to the HgdC family. In terms of assembly, homodimer. It depends on [4Fe-4S] cluster as a cofactor. Requires Mg(2+) as cofactor.

It carries out the reaction ATP + H2O = ADP + phosphate + H(+). It functions in the pathway amino-acid degradation; L-glutamate degradation via hydroxyglutarate pathway; crotonoyl-CoA from L-glutamate: step 4/5. With respect to regulation, inactivated by exposure to air within less than 15 minutes. In terms of biological role, involved in the fermentation of L-glutamate via the hydroxyglutarate pathway. HgdC (CompA) has a very low ATPase activity, whose the role is to activate dehydratase HgdA-HgdB complex and then maintain an appropriate redox state via an ATP-dependent electron transfer. The dehydratase requires only catalytic amounts of ATP and substoichiometric amounts of HgdC (CompA) to be functional. The chain is (R)-2-hydroxyglutaryl-CoA dehydratase activating ATPase from Acidaminococcus fermentans (strain ATCC 25085 / DSM 20731 / CCUG 9996 / CIP 106432 / VR4).